A 137-amino-acid chain; its full sequence is Large-conductance mechanosensitive channel (137 aa).

The next 2 helical transmembrane spans lie at Phe10–Gly30 and Gly76–Ile96.

The protein belongs to the MscL family. Homopentamer.

The protein localises to the cell inner membrane. Channel that opens in response to stretch forces in the membrane lipid bilayer. May participate in the regulation of osmotic pressure changes within the cell. This is Large-conductance mechanosensitive channel from Pectobacterium carotovorum subsp. carotovorum (strain PC1).